A 278-amino-acid chain; its full sequence is Urease accessory protein UreD (278 aa).

The protein belongs to the UreD family. UreD, UreF and UreG form a complex that acts as a GTP-hydrolysis-dependent molecular chaperone, activating the urease apoprotein by helping to assemble the nickel containing metallocenter of UreC. The UreE protein probably delivers the nickel.

It localises to the cytoplasm. Functionally, required for maturation of urease via the functional incorporation of the urease nickel metallocenter. The protein is Urease accessory protein UreD of Staphylococcus epidermidis (strain ATCC 12228 / FDA PCI 1200).